The chain runs to 215 residues: Imidazole glycerol phosphate synthase subunit HisH (215 aa).

The Glutamine amidotransferase type-1 domain maps to 9–215 (EVVLVDYGLG…QNFVDYCLER (207 aa)). The active-site Nucleophile is cysteine 85. Catalysis depends on residues histidine 193 and glutamate 195.

In terms of assembly, heterodimer of HisH and HisF.

The protein resides in the cytoplasm. It carries out the reaction 5-[(5-phospho-1-deoxy-D-ribulos-1-ylimino)methylamino]-1-(5-phospho-beta-D-ribosyl)imidazole-4-carboxamide + L-glutamine = D-erythro-1-(imidazol-4-yl)glycerol 3-phosphate + 5-amino-1-(5-phospho-beta-D-ribosyl)imidazole-4-carboxamide + L-glutamate + H(+). The catalysed reaction is L-glutamine + H2O = L-glutamate + NH4(+). Its pathway is amino-acid biosynthesis; L-histidine biosynthesis; L-histidine from 5-phospho-alpha-D-ribose 1-diphosphate: step 5/9. IGPS catalyzes the conversion of PRFAR and glutamine to IGP, AICAR and glutamate. The HisH subunit catalyzes the hydrolysis of glutamine to glutamate and ammonia as part of the synthesis of IGP and AICAR. The resulting ammonia molecule is channeled to the active site of HisF. The chain is Imidazole glycerol phosphate synthase subunit HisH from Natronomonas pharaonis (strain ATCC 35678 / DSM 2160 / CIP 103997 / JCM 8858 / NBRC 14720 / NCIMB 2260 / Gabara) (Halobacterium pharaonis).